The primary structure comprises 572 residues: Nuclear hormone receptor family member nhr-25 (572 aa).

A DNA-binding region (nuclear receptor) is located at residues G15–A90. 2 NR C4-type zinc fingers span residues C18–C38 and C54–C78. An NR LBD domain is found at P307–V567.

The protein belongs to the nuclear hormone receptor family. Interacts with lin-39. Interacts with nob-1. Expressed in the epidermis, the developing somatic gonad, and a subset of other epithelial cells.

It is found in the nucleus. Functionally, orphan nuclear receptor and probable transcription activator, required during development. Plays a role in male tail tip morphogenesis regulating the expression of the transcription factor dmd-3 in a negative feedback loop. Regulates vulval precursor cell (VPC) differentiation, in concert with homeobox protein lin-39. Involved in promoting embryogenesis, in concert with homeobox protein nob-1. May play a role in modulation of lifespan and immunity. The polypeptide is Nuclear hormone receptor family member nhr-25 (Caenorhabditis elegans).